A 1832-amino-acid chain; its full sequence is Zinc finger protein 646 (1832 aa).

8 C2H2-type zinc fingers span residues 8 to 31 (LSCS…ELLH), 48 to 70 (YRCQ…RRTH), 75 to 97 (FPCT…MRTH), 239 to 261 (YKCS…RQSH), 266 to 288 (YPCA…SRLH), 294 to 316 (YHCP…QQSH), 374 to 396 (FRCG…RKSH), and 401 to 424 (YPCS…RAHH). Positions 26–47 (HRELLHPSPNQDSEEADSIPRP) are disordered. The span at 94–108 (MRTHAPEGRRRHRPP) shows a compositional bias: basic residues. The interval 94–200 (MRTHAPEGRR…TNSARAPPLP (107 aa)) is disordered. Positions 313 to 329 (QQSHEGERQEPRWEEKG) are enriched in basic and acidic residues. The interval 313 to 346 (QQSHEGERQEPRWEEKGMPTTNGHTDESSQDQLP) is disordered. A Glycyl lysine isopeptide (Lys-Gly) (interchain with G-Cter in SUMO2) cross-link involves residue lysine 451. 2 consecutive C2H2-type zinc fingers follow at residues 465-487 (YKCS…RHSH) and 492-514 (YQCS…VRVH). Glycyl lysine isopeptide (Lys-Gly) (interchain with G-Cter in SUMO2) cross-links involve residues lysine 534 and lysine 557. The C2H2-type 11 zinc finger occupies 575–597 (HICSICGLLFEDAESLERHGLTH). Serine 612 carries the post-translational modification Phosphoserine. C2H2-type zinc fingers lie at residues 617-639 (FACR…RQTH) and 644-666 (FSCG…LRRH). The tract at residues 660–810 (KNHLRRHSRR…QPNSSSHSAN (151 aa)) is disordered. The span at 661 to 678 (NHLRRHSRRRSRRHRKRA) shows a compositional bias: basic residues. Lysine 688 is covalently cross-linked (Glycyl lysine isopeptide (Lys-Gly) (interchain with G-Cter in SUMO2)). Residues 735 to 767 (EGDKCGLERDETHFQGDKESGGTGEGLERKDAS) are compositionally biased toward basic and acidic residues. Over residues 798 to 810 (ATGQPNSSSHSAN) the composition is skewed to polar residues. 3 consecutive C2H2-type zinc fingers follow at residues 821 to 843 (HTCS…RPCH), 848 to 870 (YQCS…FQNH), and 881 to 904 (FLCC…RQAH). Residues 901 to 931 (RQAHSSSGMTEGSEEEGEEEGVAEAAPARSP) are disordered. Acidic residues predominate over residues 912–922 (GSEEEGEEEGV). Residues 958 to 980 (HICGCCGQTYDDLGSLERHHQSQ) form a C2H2-type 17; degenerate zinc finger. C2H2-type zinc fingers lie at residues 1052–1074 (FRCN…RKIH) and 1079–1101 (FLCP…LRNH). The disordered stretch occupies residues 1103–1148 (RCKGSEPQVGPIPEAAGSSELQVGPIPEGGSNKPQHMAEEGPGQAE). Residues lysine 1157, lysine 1168, and lysine 1178 each participate in a glycyl lysine isopeptide (Lys-Gly) (interchain with G-Cter in SUMO2) cross-link. 6 consecutive C2H2-type zinc fingers follow at residues 1203 to 1225 (FSCE…RQSH), 1230 to 1252 (FGCQ…RRIH), 1258 to 1280 (FRCS…QRVH), 1299 to 1321 (FRCG…RRSH), 1326 to 1348 (YSCP…QRLH), and 1364 to 1386 (VRCA…LREH). Residues 1274–1294 (ASHQRVHMERRGGGGTRKATR) form a disordered region. Disordered stretches follow at residues 1377–1481 (GSLE…WVPQ) and 1509–1529 (TLSH…QPGS). Basic and acidic residues predominate over residues 1378 to 1393 (SLERHLREHEETEREP). Polar residues predominate over residues 1406–1417 (SEANLTGSQGLE). The segment covering 1427–1438 (PHLEDGVPRPGE) has biased composition (basic and acidic residues). The segment covering 1460–1475 (GKAGGWPVGGGLGNHS) has biased composition (gly residues). 6 C2H2-type zinc fingers span residues 1557–1579 (HYCL…SHNH), 1585–1607 (FACP…LQAH), 1677–1699 (FRCT…QKAH), 1704–1726 (YPCS…SRTH), 1732–1754 (HCCS…GRVH), and 1761–1783 (FTCP…QQQH). The tract at residues 1606 to 1672 (AHARGHSQVP…QAVTSMAAED (67 aa)) is disordered. The tract at residues 1781–1832 (QQHQEEWTVAGSGAPVAPVTGRGDLPLPPPPTPTTPLLDPSPQWPADLSFSL) is disordered.

This sequence belongs to the krueppel C2H2-type zinc-finger protein family.

It is found in the nucleus. Functionally, may be involved in transcriptional regulation. This Homo sapiens (Human) protein is Zinc finger protein 646.